The chain runs to 468 residues: Sushi repeat-containing protein SRPX2 (468 aa).

The N-terminal stretch at Met1–Thr25 is a signal peptide. 3 consecutive Sushi domains span residues Ala72–Gln122, Ile123–Asp181, and Arg265–Pro324. 4 disulfide bridges follow: Cys74–Cys108, Cys94–Cys120, Cys125–Cys166, and Cys152–Cys179. Residues Val180–Val264 enclose the HYR domain. Disulfide bonds link Cys267–Cys309 and Cys295–Cys322.

Forms homooligomers. Interacts with PLAUR (via the UPAR/Ly6 domains), ADAMTS4 and CTSB. Interacts with HGF; the interaction increases the mitogenic activity of HGF. Post-translationally, contains chondroitin sulfate chains. In terms of tissue distribution, expressed in angiogenic endothelial cells (at protein level).

Its subcellular location is the secreted. It is found in the cytoplasm. The protein resides in the cell surface. The protein localises to the synapse. In terms of biological role, acts as a ligand for the urokinase plasminogen activator surface receptor. Plays a role in angiogenesis by inducing endothelial cell migration and the formation of vascular network (cords). Involved in cellular migration and adhesion. Increases the phosphorylation levels of FAK. Interacts with and increases the mitogenic activity of HGF. Promotes synapse formation. Required for ultrasonic vocalizations. The protein is Sushi repeat-containing protein SRPX2 (Srpx2) of Mus musculus (Mouse).